Consider the following 271-residue polypeptide: Phosphonoacetaldehyde hydrolase (271 aa).

Aspartate 12 (nucleophile) is an active-site residue. Residues aspartate 12 and alanine 14 each contribute to the Mg(2+) site. The active-site Schiff-base intermediate with substrate is the lysine 54. Aspartate 188 provides a ligand contact to Mg(2+).

Belongs to the HAD-like hydrolase superfamily. PhnX family. Homodimer. It depends on Mg(2+) as a cofactor.

It carries out the reaction phosphonoacetaldehyde + H2O = acetaldehyde + phosphate + H(+). In terms of biological role, involved in phosphonate degradation. The protein is Phosphonoacetaldehyde hydrolase of Aliivibrio salmonicida (strain LFI1238) (Vibrio salmonicida (strain LFI1238)).